A 371-amino-acid polypeptide reads, in one-letter code: 4-hydroxy-3-methylbut-2-en-1-yl diphosphate synthase (flavodoxin) (371 aa).

4 residues coordinate [4Fe-4S] cluster: Cys269, Cys272, Cys304, and Glu311.

This sequence belongs to the IspG family. The cofactor is [4Fe-4S] cluster.

It catalyses the reaction (2E)-4-hydroxy-3-methylbut-2-enyl diphosphate + oxidized [flavodoxin] + H2O + 2 H(+) = 2-C-methyl-D-erythritol 2,4-cyclic diphosphate + reduced [flavodoxin]. The protein operates within isoprenoid biosynthesis; isopentenyl diphosphate biosynthesis via DXP pathway; isopentenyl diphosphate from 1-deoxy-D-xylulose 5-phosphate: step 5/6. Its function is as follows. Converts 2C-methyl-D-erythritol 2,4-cyclodiphosphate (ME-2,4cPP) into 1-hydroxy-2-methyl-2-(E)-butenyl 4-diphosphate. The polypeptide is 4-hydroxy-3-methylbut-2-en-1-yl diphosphate synthase (flavodoxin) (Acinetobacter baylyi (strain ATCC 33305 / BD413 / ADP1)).